We begin with the raw amino-acid sequence, 41 residues long: U-AITX-Bg1a (41 aa).

3 disulfides stabilise this stretch: Cys2–Cys35, Cys4–Cys28, and Cys18–Cys36.

The protein belongs to the sea anemone type 3 (BDS) potassium channel toxin family.

The protein localises to the secreted. It is found in the nematocyst. Functionally, potently and selectively inhibits voltage-gated potassium channels Kv11/KCNH/ERG. Acts as a gating-modifier toxin that shifts the voltage-dependence of ERG activation in the positive direction and suppresses its current amplitudes elicited by strong depolarizing pulses that maximally activate the channels. The protein is U-AITX-Bg1a of Bunodosoma granuliferum (Red warty sea anemone).